Reading from the N-terminus, the 86-residue chain is Progonadoliberin-2 (86 aa).

The first 24 residues, 1–24, serve as a signal peptide directing secretion; it reads MVSVCRLLLVAALLLCLQAQLSFS. Position 25 is a pyrrolidone carboxylic acid (Q25). Position 34 is a glycine amide (G34).

It belongs to the GnRH family.

Its subcellular location is the secreted. In terms of biological role, stimulates the secretion of gonadotropins. The polypeptide is Progonadoliberin-2 (gnrh2) (Clarias gariepinus (North African catfish)).